Consider the following 352-residue polypeptide: Pejvakin (352 aa).

This sequence belongs to the gasdermin family. Interacts with MAP1LC3B; interaction is direct. Interacts with IQGAP1. Interacts with ROCK2. Interacts with TRIOBP. As to expression, in ear, it is detected in the organ of Corti and the spiral ganglion within the cochlea in the sensory areas of the vestibule (cristae ampullares of the semicircular ducts, and maculae of the saccule and utricle) and in the first 3 relays (cochlear nuclei, superior olivary complex and inferior colliculus) of the afferent auditory pathway. Detected in hair cells of the cochlea and vestibule but not in neurons. In the afferent auditory pathway, it is present in the cell bodies of neurons but not in fiber bundles such as the trapezoid body in the brainstem. Also detected in spiral ganglion cells, which form the auditory nerve and project to the cochlear nuclei in the brainstem. Also present in the cochlear nuclei, the superior olive and the inferior colliculus (at protein level). Expressed in all the adult organs tested: brain, eye, inner ear, heart, lung, kidney, liver, intestine, testis and weakly in skeletal muscle.

The protein resides in the peroxisome membrane. It is found in the cell projection. The protein localises to the cilium. In terms of biological role, peroxisome-associated protein required to protect auditory hair cells against noise-induced damage. Acts by regulating noise-induced peroxisome proliferation in auditory hair cells and neurons, and promoting autophagic degradation of damaged peroxisomes (pexophagy). Noise overexposure increases reactive oxygen species (ROS) levels, causing oxidative damage to auditory hair cells and resulting in hearing loss. PJVK acts as a ROS sensor that recruits the autophagy machinery to trigger pexophagy of peroxisomes damaged by oxidative stress. In addition to pexophagy, also required to promote peroxisome proliferation in response to sound overstimulation. This is Pejvakin from Mus musculus (Mouse).